The chain runs to 270 residues: Putative pyruvate, phosphate dikinase regulatory protein (270 aa).

An ADP-binding site is contributed by 151–158 (GVSRTSKT).

This sequence belongs to the pyruvate, phosphate/water dikinase regulatory protein family. PDRP subfamily.

It carries out the reaction N(tele)-phospho-L-histidyl/L-threonyl-[pyruvate, phosphate dikinase] + ADP = N(tele)-phospho-L-histidyl/O-phospho-L-threonyl-[pyruvate, phosphate dikinase] + AMP + H(+). The catalysed reaction is N(tele)-phospho-L-histidyl/O-phospho-L-threonyl-[pyruvate, phosphate dikinase] + phosphate + H(+) = N(tele)-phospho-L-histidyl/L-threonyl-[pyruvate, phosphate dikinase] + diphosphate. Bifunctional serine/threonine kinase and phosphorylase involved in the regulation of the pyruvate, phosphate dikinase (PPDK) by catalyzing its phosphorylation/dephosphorylation. The polypeptide is Putative pyruvate, phosphate dikinase regulatory protein (Bacillus velezensis (strain DSM 23117 / BGSC 10A6 / LMG 26770 / FZB42) (Bacillus amyloliquefaciens subsp. plantarum)).